The primary structure comprises 854 residues: ATP-dependent zinc metalloprotease FtsH (854 aa).

At 1-5 (MNRKT) the chain is on the cytoplasmic side. The chain crosses the membrane as a helical span at residues 6–26 (VFRNVLLVAVVLLVIYAFSYF). At 27–112 (SNDTRDFKTV…FNTTVTQESW (86 aa)) the chain is on the extracellular side. The helical transmembrane segment at 113–133 (LTSILLFVLPMIILFGIFFFV) threads the bilayer. The Cytoplasmic segment spans residues 134–854 (MNRMQGGGGR…ARWDGPDGSR (721 aa)). ATP is bound at residue 207 to 214 (GPPGTGKT). His429 serves as a coordination point for Zn(2+). The active site involves Glu430. 2 residues coordinate Zn(2+): His433 and Asp505. Positions 658–854 (AGAPNSGVPN…ARWDGPDGSR (197 aa)) are disordered. 2 stretches are compositionally biased toward low complexity: residues 661–692 (PNSGVPNGGVPNNGGLPNNGNQGPSNGYAQPS) and 698–719 (APQQTPQPGTPDYGAPAGWSAP). Residues 720–730 (GWPPRENPSPT) show a composition bias toward pro residues. A compositionally biased stretch (low complexity) spans 749-778 (NQSQGQYGQPQHGQPQPDQGQYGQPHPGQQ). Positions 812-822 (GNPSGENQWQS) are enriched in polar residues. Residues 825-834 (PEQPQTPPPH) show a composition bias toward pro residues.

This sequence in the central section; belongs to the AAA ATPase family. The protein in the C-terminal section; belongs to the peptidase M41 family. In terms of assembly, homohexamer. The cofactor is Zn(2+).

The protein resides in the cell membrane. In terms of biological role, acts as a processive, ATP-dependent zinc metallopeptidase for both cytoplasmic and membrane proteins. Plays a role in the quality control of integral membrane proteins. The protein is ATP-dependent zinc metalloprotease FtsH of Rhodococcus erythropolis (strain PR4 / NBRC 100887).